A 242-amino-acid polypeptide reads, in one-letter code: EF-hand domain-containing protein D2 (242 aa).

Residues 1-53 (MATDELASKLSRRLQMEGEGGGEAPEQPGLNGAAAAAAAAGAPDETAEALGSA) form a disordered region. Ala-2 is subject to N-acetylalanine. Ser-11 is subject to Phosphoserine. The span at 32 to 42 (GAAAAAAAAGA) shows a compositional bias: low complexity. Ser-76 and Ser-78 each carry phosphoserine. Position 85 is a phosphotyrosine (Tyr-85). 2 consecutive EF-hand domains span residues 94–129 (KQIK…LGAP) and 130–165 (QTHL…AAAG). Positions 107, 111, 118, 143, 145, 147, 149, and 154 each coordinate Ca(2+). Lys-235 bears the N6-acetyllysine mark.

As to quaternary structure, interacts with CASP9; with inactive form.

The protein resides in the membrane raft. Functionally, may regulate B-cell receptor (BCR)-induced immature and primary B-cell apoptosis. Plays a role as negative regulator of the canonical NF-kappa-B-activating branch. Controls spontaneous apoptosis through the regulation of BCL2L1 abundance. This chain is EF-hand domain-containing protein D2 (EFHD2), found in Bos taurus (Bovine).